A 537-amino-acid polypeptide reads, in one-letter code: Cytochrome P450 monooxygenase alt2 (537 aa).

The helical transmembrane segment at 4–24 (HLLILAAVVLLIIHIVNNFLI) threads the bilayer. Residue Cys-474 participates in heme binding.

The protein belongs to the cytochrome P450 family. Heme is required as a cofactor.

The protein localises to the membrane. Its pathway is secondary metabolite biosynthesis. Functionally, cytochrome P450 monooxygenase; part of the gene cluster that mediates the biosynthesis of alternapyrone derivatives. Alternapyrone is a decaketide with octa-methylation from methionine on every C2 unit except the third unit. All the domains in the polyketide synthase alt5 are apparently involved in alternapyrone synthesis, that is, the 8 CMeT, 7 KR, 7 DH, and 4 ER reactions in the 9 KS-mediated condensation steps required for alternapyrone synthesis. the alternapyrone produced by alt5 might be intensively modified by cytochrome P450 monooxygenases alt1, alt2 and alt3 and FAD-dependent oxidoreductase alt4 present in the alt gene cluster. The chain is Cytochrome P450 monooxygenase alt2 from Alternaria solani.